Reading from the N-terminus, the 428-residue chain is UPF0597 protein BF3560 (428 aa).

The protein belongs to the UPF0597 family.

This Bacteroides fragilis (strain ATCC 25285 / DSM 2151 / CCUG 4856 / JCM 11019 / LMG 10263 / NCTC 9343 / Onslow / VPI 2553 / EN-2) protein is UPF0597 protein BF3560.